The primary structure comprises 309 residues: Probable manganese-dependent inorganic pyrophosphatase (309 aa).

Mn(2+) is bound by residues histidine 9, aspartate 13, aspartate 15, aspartate 75, histidine 97, and aspartate 149.

This sequence belongs to the PPase class C family. It depends on Mn(2+) as a cofactor.

It localises to the cytoplasm. It catalyses the reaction diphosphate + H2O = 2 phosphate + H(+). In Bacillus mycoides (strain KBAB4) (Bacillus weihenstephanensis), this protein is Probable manganese-dependent inorganic pyrophosphatase.